The sequence spans 659 residues: Pentatricopeptide repeat-containing protein At3g26782, mitochondrial (659 aa).

The N-terminal 24 residues, 1 to 24 (MKVRSKKALFCSVSRLLHTERHTE), are a transit peptide targeting the mitochondrion. PPR repeat units follow at residues 40 to 74 (DVFS…SLYP), 75 to 109 (TRSS…GYQS), 110 to 144 (DIFV…NIVS), 145 to 171 (WTSM…LLVD), 182 to 216 (DSMG…GFDR), 217 to 249 (GVSV…IVDK), 250 to 284 (DRVS…KVVT), 286 to 320 (NAIT…GLED), 321 to 351 (DVIV…MKNK), 352 to 386 (NVRS…GVRP), 387 to 422 (NYIT…GVEP), and 423 to 453 (GLEH…MKMK). Positions 458 to 533 (IWSSLLAACR…PPGFSLLELN (76 aa)) are type E motif. Positions 534 to 564 (GEVHVFLIGDEEHPQREKIYEFLAELNRKLL) are type E(+) motif. Positions 565 to 659 (EAGYVSNTSS…DGGCSCGDYW (95 aa)) are type DYW motif.

The protein belongs to the PPR family. PCMP-H subfamily.

The protein localises to the mitochondrion. In Arabidopsis thaliana (Mouse-ear cress), this protein is Pentatricopeptide repeat-containing protein At3g26782, mitochondrial (PCMP-H34).